The following is a 251-amino-acid chain: Hydroxyacylglutathione hydrolase (251 aa).

The Zn(2+) site is built by H53, H55, D57, H58, H110, D127, and H165.

The protein belongs to the metallo-beta-lactamase superfamily. Glyoxalase II family. Monomer. It depends on Zn(2+) as a cofactor.

The enzyme catalyses an S-(2-hydroxyacyl)glutathione + H2O = a 2-hydroxy carboxylate + glutathione + H(+). The protein operates within secondary metabolite metabolism; methylglyoxal degradation; (R)-lactate from methylglyoxal: step 2/2. Thiolesterase that catalyzes the hydrolysis of S-D-lactoyl-glutathione to form glutathione and D-lactic acid. The sequence is that of Hydroxyacylglutathione hydrolase from Shigella boydii serotype 4 (strain Sb227).